A 473-amino-acid chain; its full sequence is Ribosomal RNA small subunit methyltransferase F (473 aa).

S-adenosyl-L-methionine contacts are provided by residues 124–130 (ASAPGSK), E148, D175, and D193. C246 (nucleophile) is an active-site residue.

The protein belongs to the class I-like SAM-binding methyltransferase superfamily. RsmB/NOP family.

Its subcellular location is the cytoplasm. It carries out the reaction cytidine(1407) in 16S rRNA + S-adenosyl-L-methionine = 5-methylcytidine(1407) in 16S rRNA + S-adenosyl-L-homocysteine + H(+). Its function is as follows. Specifically methylates the cytosine at position 1407 (m5C1407) of 16S rRNA. In Aliivibrio fischeri (strain MJ11) (Vibrio fischeri), this protein is Ribosomal RNA small subunit methyltransferase F.